Consider the following 230-residue polypeptide: Respiratory supercomplex factor 1, mitochondrial (230 aa).

A compositionally biased stretch (pro residues) spans 1-12; sequence MADGPPSIPGPL. Residues 1–20 are disordered; sequence MADGPPSIPGPLPSSFDSDQ. The HIG1 domain occupies 12 to 103; the sequence is LPSSFDSDQD…KDREKSKELR (92 aa). A run of 2 helical transmembrane segments spans residues 40-59 and 71-93; these read LIPLGIGLTSLAFVNAYRAL and FRARVAAQGFTVIAMLAGSMYYQ. A coiled-coil region spans residues 93 to 156; the sequence is QKDREKSKEL…RAEEAEAAAA (64 aa). Positions 153–230 are disordered; the sequence is AAAAAAATTE…GEIISSQKKD (78 aa). The span at 185-196 shows a compositional bias: basic and acidic residues; it reads GEKKEEEKKVAE.

This sequence belongs to the RCF1 family. Associates with the respiratory chain complex III/complex IV supercomplex.

Its subcellular location is the mitochondrion membrane. Cytochrome c oxidase subunit which plays a role in assembly of respiratory supercomplexes. The polypeptide is Respiratory supercomplex factor 1, mitochondrial (RCF1) (Fusarium vanettenii (strain ATCC MYA-4622 / CBS 123669 / FGSC 9596 / NRRL 45880 / 77-13-4) (Fusarium solani subsp. pisi)).